The chain runs to 224 residues: uncharacterized protein (224 aa).

A run of 5 helical transmembrane segments spans residues Ile-32 to Val-52, Leu-60 to Phe-80, Ile-100 to Gly-120, Ala-130 to Phe-150, and Leu-162 to Ile-182.

Belongs to the derlin family.

Its subcellular location is the endoplasmic reticulum membrane. This is an uncharacterized protein from Schizosaccharomyces pombe (strain 972 / ATCC 24843) (Fission yeast).